A 357-amino-acid chain; its full sequence is 3-dehydroquinate synthase (357 aa).

NAD(+) contacts are provided by residues D69–K74, G103–D107, T127–T128, K140, K149, and C167–T170. Residues E182, H245, and H262 each coordinate Zn(2+).

This sequence belongs to the sugar phosphate cyclases superfamily. Dehydroquinate synthase family. Requires Co(2+) as cofactor. Zn(2+) is required as a cofactor. The cofactor is NAD(+).

The protein resides in the cytoplasm. It catalyses the reaction 7-phospho-2-dehydro-3-deoxy-D-arabino-heptonate = 3-dehydroquinate + phosphate. Its pathway is metabolic intermediate biosynthesis; chorismate biosynthesis; chorismate from D-erythrose 4-phosphate and phosphoenolpyruvate: step 2/7. Catalyzes the conversion of 3-deoxy-D-arabino-heptulosonate 7-phosphate (DAHP) to dehydroquinate (DHQ). This chain is 3-dehydroquinate synthase, found in Idiomarina loihiensis (strain ATCC BAA-735 / DSM 15497 / L2-TR).